A 272-amino-acid chain; its full sequence is R3H domain-containing protein 4 (272 aa).

The segment at 141 to 167 (LEDEGKSKARRRGPTRGEDRRREDPAY) is disordered. Residues 155–165 (TRGEDRRREDP) are compositionally biased toward basic and acidic residues. Positions 191–254 (METLETWEER…KRQMKVSNRH (64 aa)) constitute an R3H domain.

The protein localises to the nucleus. This Bos taurus (Bovine) protein is R3H domain-containing protein 4 (R3HDM4).